We begin with the raw amino-acid sequence, 233 residues long: Protein Thf1 (233 aa).

Residues 183-205 (DKLSKDLELYRSNLDKMTQALAV) are a coiled coil. A disordered region spans residues 213-233 (DRKKREQRQQQASTPVAPPNE).

Belongs to the THF1 family.

Functionally, may be involved in photosynthetic membrane biogenesis. This chain is Protein Thf1, found in Trichormus variabilis (strain ATCC 29413 / PCC 7937) (Anabaena variabilis).